Reading from the N-terminus, the 118-residue chain is Large ribosomal subunit protein bL21c (118 aa).

Belongs to the bacterial ribosomal protein bL21 family. In terms of assembly, part of the 50S ribosomal subunit.

The protein resides in the plastid. The protein localises to the chloroplast. In terms of biological role, this protein binds to 23S rRNA. The protein is Large ribosomal subunit protein bL21c of Zygnema circumcarinatum (Green alga).